A 600-amino-acid polypeptide reads, in one-letter code: Elongation factor 4 (600 aa).

The 183-residue stretch at 4-186 (SKIRNFSIIA…AIVNKIPAPY (183 aa)) folds into the tr-type G domain. GTP contacts are provided by residues 16-21 (DHGKST) and 133-136 (NKVD).

The protein belongs to the TRAFAC class translation factor GTPase superfamily. Classic translation factor GTPase family. LepA subfamily.

It localises to the cell membrane. It carries out the reaction GTP + H2O = GDP + phosphate + H(+). In terms of biological role, required for accurate and efficient protein synthesis under certain stress conditions. May act as a fidelity factor of the translation reaction, by catalyzing a one-codon backward translocation of tRNAs on improperly translocated ribosomes. Back-translocation proceeds from a post-translocation (POST) complex to a pre-translocation (PRE) complex, thus giving elongation factor G a second chance to translocate the tRNAs correctly. Binds to ribosomes in a GTP-dependent manner. The sequence is that of Elongation factor 4 from Mesoplasma florum (strain ATCC 33453 / NBRC 100688 / NCTC 11704 / L1) (Acholeplasma florum).